The sequence spans 350 residues: Heme A synthase (350 aa).

Transmembrane regions (helical) follow at residues 14-34 (VAIWLFLCSVMVILMVGIGGF), 95-115 (YVHRLVARLTGLVFVLPFIYF), 125-145 (VVIKLFVALLFGALQAFAGWY), 162-182 (LALHLLLALIIFALFSYQFFD), 202-222 (VGIILVLIMIQIIFGAFVAGL), 260-280 (VQFIHRALALLILTLVVILTV), 296-316 (IIQIILGVITLLLHIPIAIAI), and 317-337 (AHQVFSFILFGSSLYFLCYLR). His-264 is a binding site for heme. His-318 provides a ligand contact to heme.

It belongs to the COX15/CtaA family. Type 2 subfamily. As to quaternary structure, interacts with CtaB. The cofactor is heme b.

The protein localises to the cell membrane. It catalyses the reaction Fe(II)-heme o + 2 A + H2O = Fe(II)-heme a + 2 AH2. The protein operates within porphyrin-containing compound metabolism; heme A biosynthesis; heme A from heme O: step 1/1. Functionally, catalyzes the conversion of heme O to heme A by two successive hydroxylations of the methyl group at C8. The first hydroxylation forms heme I, the second hydroxylation results in an unstable dihydroxymethyl group, which spontaneously dehydrates, resulting in the formyl group of heme A. This is Heme A synthase from Wolbachia pipientis wMel.